A 137-amino-acid chain; its full sequence is Large ribosomal subunit protein uL16 (137 aa).

The protein belongs to the universal ribosomal protein uL16 family. Part of the 50S ribosomal subunit.

In terms of biological role, binds 23S rRNA and is also seen to make contacts with the A and possibly P site tRNAs. The chain is Large ribosomal subunit protein uL16 from Streptococcus thermophilus (strain CNRZ 1066).